Reading from the N-terminus, the 622-residue chain is Type 2 DNA topoisomerase 6 subunit B (622 aa).

ATP-binding positions include asparagine 48, aspartate 80, 101–102 (SR), 111–118 (GQQGIGIS), and lysine 435.

It belongs to the TOP6B family. Homodimer. Heterotetramer of two Top6A and two Top6B chains.

It carries out the reaction ATP-dependent breakage, passage and rejoining of double-stranded DNA.. Its function is as follows. Relaxes both positive and negative superturns and exhibits a strong decatenase activity. This is Type 2 DNA topoisomerase 6 subunit B from Methanococcoides burtonii (strain DSM 6242 / NBRC 107633 / OCM 468 / ACE-M).